A 743-amino-acid polypeptide reads, in one-letter code: 1,4-alpha-glucan branching enzyme GlgB (743 aa).

The Nucleophile role is filled by Asp416. Glu469 acts as the Proton donor in catalysis.

The protein belongs to the glycosyl hydrolase 13 family. GlgB subfamily. As to quaternary structure, monomer.

It carries out the reaction Transfers a segment of a (1-&gt;4)-alpha-D-glucan chain to a primary hydroxy group in a similar glucan chain.. The protein operates within glycan biosynthesis; glycogen biosynthesis. Catalyzes the formation of the alpha-1,6-glucosidic linkages in glycogen by scission of a 1,4-alpha-linked oligosaccharide from growing alpha-1,4-glucan chains and the subsequent attachment of the oligosaccharide to the alpha-1,6 position. The protein is 1,4-alpha-glucan branching enzyme GlgB of Shewanella baltica (strain OS223).